The sequence spans 202 residues: Glycerol-3-phosphate acyltransferase (202 aa).

6 helical membrane passes run 3-23, 61-81, 87-107, 118-138, 144-164, and 167-187; these read NLII…LILA, IATI…LKFL, LLWS…YLLF, GAMI…WVVI, ISSL…FIFN, and LEIH…YKHL.

Belongs to the PlsY family. As to quaternary structure, probably interacts with PlsX.

It is found in the cell inner membrane. The catalysed reaction is an acyl phosphate + sn-glycerol 3-phosphate = a 1-acyl-sn-glycero-3-phosphate + phosphate. The protein operates within lipid metabolism; phospholipid metabolism. In terms of biological role, catalyzes the transfer of an acyl group from acyl-phosphate (acyl-PO(4)) to glycerol-3-phosphate (G3P) to form lysophosphatidic acid (LPA). This enzyme utilizes acyl-phosphate as fatty acyl donor, but not acyl-CoA or acyl-ACP. The chain is Glycerol-3-phosphate acyltransferase from Campylobacter jejuni subsp. jejuni serotype O:23/36 (strain 81-176).